A 644-amino-acid polypeptide reads, in one-letter code: Exoribonuclease 2 (644 aa).

Positions 189 to 516 constitute an RNB domain; it reads RQDLTALNFV…NHRLLKAVIK (328 aa). Residues 561–643 form the S1 motif domain; sequence NTRFAAEIID…ETRSIIARPA (83 aa).

Belongs to the RNR ribonuclease family. RNase II subfamily.

The protein localises to the cytoplasm. The enzyme catalyses Exonucleolytic cleavage in the 3'- to 5'-direction to yield nucleoside 5'-phosphates.. Its function is as follows. Involved in mRNA degradation. Hydrolyzes single-stranded polyribonucleotides processively in the 3' to 5' direction. This Salmonella typhi protein is Exoribonuclease 2.